A 118-amino-acid polypeptide reads, in one-letter code: Small ribosomal subunit protein uS13 (118 aa).

Residues 94–118 (GLPLRGQRTRTNARTRKGPRRPIRK) are disordered.

The protein belongs to the universal ribosomal protein uS13 family. Part of the 30S ribosomal subunit. Forms a loose heterodimer with protein S19. Forms two bridges to the 50S subunit in the 70S ribosome.

In terms of biological role, located at the top of the head of the 30S subunit, it contacts several helices of the 16S rRNA. In the 70S ribosome it contacts the 23S rRNA (bridge B1a) and protein L5 of the 50S subunit (bridge B1b), connecting the 2 subunits; these bridges are implicated in subunit movement. Contacts the tRNAs in the A and P-sites. The sequence is that of Small ribosomal subunit protein uS13 from Thioalkalivibrio sulfidiphilus (strain HL-EbGR7).